We begin with the raw amino-acid sequence, 406 residues long: D-alanyl-D-alanine carboxypeptidase (406 aa).

A signal peptide spans 1-31 (MVSGTVGRGTALGAVLLALLAVPAQAGTAAA). The Acyl-ester intermediate role is filled by serine 93. Substrate is bound by residues 151-154 (FAQT), 190-192 (YSN), arginine 316, 330-332 (TGT), and 357-358 (SN). Positions 381–406 (AKLRSATSSATTVERHEDIAPGIARD) are excised as a propeptide. A disordered region spans residues 387–406 (TSSATTVERHEDIAPGIARD). Residues 393–406 (VERHEDIAPGIARD) are compositionally biased toward basic and acidic residues.

It belongs to the peptidase S12 family.

It is found in the secreted. The catalysed reaction is Preferential cleavage: (Ac)2-L-Lys-D-Ala-|-D-Ala. Also transpeptidation of peptidyl-alanyl moieties that are N-acyl substituents of D-alanine.. Its pathway is cell wall biogenesis; peptidoglycan biosynthesis. Its function is as follows. Catalyzes distinct carboxypeptidation and transpeptidation reactions during the last stages of wall peptidoglycan synthesis. Mistaking a beta-lactam antibiotic molecule for a normal substrate (i.e. a D-alanyl-D-alanine-terminated peptide), it becomes immobilized in the form of a long-lived, serine-ester-linked acyl enzyme and thus behave as penicillin-binding protein (PBP). The protein is D-alanyl-D-alanine carboxypeptidase of Streptomyces sp. (strain R61).